Here is a 1207-residue protein sequence, read N- to C-terminus: Chromosomal serine/threonine-protein kinase JIL-1 (1207 aa).

Over residues 1–19 (MSRLQKQNYEILSGTSTSR) the composition is skewed to polar residues. Disordered regions lie at residues 1 to 119 (MSRL…ASAR), 164 to 183 (QDMEEDEPNGIEIDESSSSL), and 210 to 230 (SSSTTPSYAMPTSNSTPLDLD). Phosphoserine is present on residues Ser29 and Ser31. Residues 45–69 (LNGQLVANGNGKTRKNSNSETMTNG) show a composition bias toward polar residues. Low complexity predominate over residues 88 to 97 (NYNNNNNNNN). Residues 98-108 (SISATNGQYTN) show a composition bias toward polar residues. Residues 109–118 (SSSKTTSASA) show a composition bias toward low complexity. A compositionally biased stretch (acidic residues) spans 164–178 (QDMEEDEPNGIEIDE). Positions 213–226 (TTPSYAMPTSNSTP) are enriched in polar residues. One can recognise a Protein kinase 1 domain in the interval 261-530 (FKIIRVLGTG…ASEIKEHPFF (270 aa)). ATP contacts are provided by residues 267–275 (LGTGAYGRV) and Lys293. Asp389 (proton acceptor) is an active-site residue. A Phosphoserine modification is found at Ser424. The AGC-kinase C-terminal domain maps to 531-599 (NGINWQELRT…VAPEHLEQMR (69 aa)). Thr588 is modified (phosphothreonine). Residues 623-886 (LELGTRTSNG…LSDILDSEWL (264 aa)) enclose the Protein kinase 2 domain. ATP is bound by residues 629-637 (TSNGAYGTC) and Lys652. Residue Asp739 is the Proton acceptor of the active site. Position 1045 is a phosphothreonine (Thr1045). At Ser1047 the chain carries Phosphoserine. The tract at residues 1168–1197 (TFPRPKAQLKRTKREPKVPRPPTRVQPERA) is disordered.

It belongs to the protein kinase superfamily. Ser/Thr protein kinase family. As to quaternary structure, interacts with lola. Interacts with proteins of the male specific lethal (MSL) dosage compensation complex; this interaction is mediated by the kinase domains. It depends on Mg(2+) as a cofactor. Autophosphorylated in vitro.

The protein localises to the nucleus. The protein resides in the chromosome. The enzyme catalyses L-seryl-[protein] + ATP = O-phospho-L-seryl-[protein] + ADP + H(+). It catalyses the reaction L-threonyl-[protein] + ATP = O-phospho-L-threonyl-[protein] + ADP + H(+). Functionally, phosphorylates 'Ser-10' of histone H3. May regulate gene expression by establishing or maintaining the structure of more open chromatin regions. Also required for normal polytene chromosome structure, for oogenesis and for viability throughout development. Regulates the structure of polytene chromosomes in salivary glands. May phosphorylate 'Ser-1' of histone H2A. The protein is Chromosomal serine/threonine-protein kinase JIL-1 of Drosophila melanogaster (Fruit fly).